The chain runs to 617 residues: MGPVDTSQRLARLRELMQERKVDVYIVPSEDSHQSEYIAPCDGRREFISGFTGSAGCAIVSMSKAALSTDGRYFNQAAKQLDNNWMLLKRGFENMPTWQEWTAEQAEGGKVVGVDPSLITASEARSLSETIEKSGGSLQGVQENLIDLVWGKERPARPSEKVALHPIEFAGKSFEEKISDLRKELQKKKSAGFVISMLDEIAWLFNLRGNDIPYNPVFFAYAIITPTTADLYIDDEKLPAEVKKYLGDQVSVKPYGSIFEDAKALSQSAQKKSDGDASTSPSEKFLISTKASWSLSLALGGEKNVEEVRSPITDAKAIKNEAELEGMRACHIRDGAALTEYFAWLENELVNKKTVLNEVDGSDKLEQIRSKHKHFVGLSFDTISSTGPNAAVIHYKAERDTCSIIDPKAVYLCDSGAQYLDGTTDTTRTLHFGEPTEMERKAYTLVLKGLISIDTAVFPKGTTGFALDAFARQHLWKEGLDYLHGTGHGVGSYLNVHEGPIGLGTRVQYAEVAITPGNVISDEPGFYEDGVFGIRIENIIIAKEVKTTHGFGEKPWLGFEHVTMTPLCQKLINPSLLTDGEKKWVNDYHSKVWEKTSSYFENDELTRNWLKRETQPI.

The Mn(2+) site is built by aspartate 414, aspartate 425, glutamate 523, and glutamate 537.

It belongs to the peptidase M24B family. Requires Mn(2+) as cofactor.

The enzyme catalyses Release of any N-terminal amino acid, including proline, that is linked to proline, even from a dipeptide or tripeptide.. Its function is as follows. Catalyzes the removal of a penultimate prolyl residue from the N-termini of peptides. The polypeptide is Probable Xaa-Pro aminopeptidase P (AMPP) (Ajellomyces dermatitidis (strain ER-3 / ATCC MYA-2586) (Blastomyces dermatitidis)).